Consider the following 107-residue polypeptide: Putative double-stranded DNA mimic protein HSM_1473 (107 aa).

This sequence belongs to the putative dsDNA mimic protein family.

Functionally, may act as a double-stranded DNA (dsDNA) mimic. Probably regulates the activity of a dsDNA-binding protein. The protein is Putative double-stranded DNA mimic protein HSM_1473 of Histophilus somni (strain 2336) (Haemophilus somnus).